The primary structure comprises 205 residues: Protein N-terminal glutamine amidohydrolase (205 aa).

Active-site residues include Cys-20, His-74, and Asp-90.

This sequence belongs to the NTAQ1 family. In terms of assembly, monomer.

The catalysed reaction is N-terminal L-glutaminyl-[protein] + H2O = N-terminal L-glutamyl-[protein] + NH4(+). Its function is as follows. Mediates the side-chain deamidation of N-terminal glutamine residues to glutamate, an important step in N-end rule pathway of protein degradation. Conversion of the resulting N-terminal glutamine to glutamate renders the protein susceptible to arginylation, polyubiquitination and degradation as specified by the N-end rule. Does not act on substrates with internal or C-terminal glutamine and does not act on non-glutamine residues in any position. The protein is Protein N-terminal glutamine amidohydrolase (tun) of Drosophila erecta (Fruit fly).